We begin with the raw amino-acid sequence, 373 residues long: WAT1-related protein At4g08300 (373 aa).

10 consecutive transmembrane segments (helical) span residues 11–31, 41–61, 67–87, 102–122, 139–159, 185–205, 219–239, 255–275, 281–301, and 306–326; these read PIIAIISLQFGYAGMYIITMV, ILATYRHVVATIVIAPFALIL, PKMTWPLFLRILALGFLEPLL, TYSSAFVNALPAITFIMAVIF, IGTAITVGGAMVMTLYKGPAI, WVTGTLAVMGSITTWAGFFIL, LVMWICAMGTVLNTIASLIMV, AAVYSGVVCSGMAYYIQSIVI, VFTTSFSPMCMIITAFLGVLV, and IHLGSIIGAIFIVFGLYSVVW. EamA domains are found at residues 23–151 and 198–325; these read AGMY…AMVM and TWAG…YSVV.

Belongs to the drug/metabolite transporter (DMT) superfamily. Plant drug/metabolite exporter (P-DME) (TC 2.A.7.4) family.

The protein localises to the membrane. The sequence is that of WAT1-related protein At4g08300 from Arabidopsis thaliana (Mouse-ear cress).